Here is a 209-residue protein sequence, read N- to C-terminus: APC/C-CDH1 modulator 1 (209 aa).

The interval 1–38 (MISPSKKRTILSSKNINQKPRAVVKGNELRSPSKRRSQ) is disordered. Position 48 is a phosphoserine (Ser-48). Thr-161 carries the post-translational modification Phosphothreonine. Ser-202 carries the post-translational modification Phosphoserine.

Interacts with CDH1, BMH1 and BMH2.

Functionally, negative regulator of GDH1, the activator protein that regulates the ubiquitin ligase activity and substrate specificity of the anaphase promoting complex/cyclosome (APC/C), and which is required for exit from mitosis, cytokinesis and formation of prereplicative complexes in G1. In Saccharomyces cerevisiae (strain ATCC 204508 / S288c) (Baker's yeast), this protein is APC/C-CDH1 modulator 1 (ACM1).